We begin with the raw amino-acid sequence, 1538 residues long: MGVPTKISILGRESIVADFGIWRNYVAKDLLSSCSSSTYVLISDTNLTPLYLEGFQKSFEDAATNVSPKPRLLTYEIPPGESSKSRETKADIEDWMLARQPPCGRDTVIIALGGGVIGDLIGFVAATYMRGVRFVQVPTTLLAMVDSSIGGKTAIDTPNGKNLIGAIWQPQRIYLDMEFLNTLPEREFINGMAEVIKTAAISSEEKFAALERDAETILAAVKSKNTPERPRFSGIEETLKRTILSSAEFKAQVVSADEREGGLRNLLNFGHSIGHAIEAILAPQVLHGECISIGMVKEAELARHLGILNNVSVSRISKCLANYGLPTSLKDQRIKKLTAGKHCSVEQLIAYMGVDKKNDGPKKKVVLLSAIGRTHEPRASTVSNEEIQIVLAPSIEVSPGVPKGLDVTCTPPGSKSISNRALVLAALGSGTCRLKNLLHSDDTEVMLNALERLGAATFSWEDEGEVLVVSGKGGRMEASSSELYVGNAGTASRFLTTVATLARKSSVDSSVLTGNARMKQRPIGDLVDALAANGASIEYLENLGCLPLKIAASGGFAGGEINLAAKVSSQYVSSLLMCAPYAKTPVTLRLVGGKPISQPYIDMTTAMMRSFGVEVKKSETEEHTYHIPLGFYTNPVEYIVESDASSATYPLAAAAITGTSCTVPNIGSKSLQGDARFAVDVLRPMGCAVDQNDFSTRVTGPPGGILSPLPNINMEPMTDAFLTASVLAAVARGKGSNRTTRIFGIANQRVKECNRIKAMKDELAKFGVVCREHDDGLEIDGIDRATLHHPSDGVYCYDDHRVAMSFSVLSLVAHEPTLILEKECVGKTWPGWWDCLSQTFKVKLDGKEVGKRTETNPIVHVNKSAASIFIIGMRGAGKTTSGFWVSKALQRPFIDLDDELERTEAYVEDMMSVWLRRKPWYEECSNVQYYSRLTGLDGMTQVSGGFNRFLKVITGEVDSLAKMRRKQNTFFVSLTLPDLGLAAHILKEVTLGSDAVELRVDLLKDPQSDNEIPSVDYVAEQISVLRSRTSVPLVFTIRTKGQGGRFPDDAYDAALQLYRLAVRMGSEFVDLEISFPEQLLRTVTEMKGFSTIIASHHDPKGQLSWVNGSWIQFYNKALQYGDVIKLVGVARSIDDNISLKKFKTWAEEKHNIPIIAINMGDKGQLSRMLNGFMTPVSHPSLPFKAAPGQLSAREIRKGLSLIGEIKAKKFAVIGNPVSASRSPAMHNTLFRQMGLPHTYGTLETDNPEVAKEFIRSPGFGGASVTIPLKLSIMPLLDEIAPEAMSIGAVNTIVCAPPAPDSKSQTPRLIGHNTDWQGMVRCLSDAGAYAAATPTTASAGLVIGGGGTARAAIFALQNMGYSPIYVLGRSPDKLSSMTSTFHTDHDIRILEDVKALESLPTVAIGTIPGDKPIEPHMREILCKLFDLCEKANSDTEQARGVSTKRILLEMAYKPSVTSLMQLASDSGWTVLPGLEALVAQGVYQCEYWTNITPVYEYARCWKVYDVKLINCERGNAISLLVLEAFTHAFYEHPVLNHSS.

Residues methionine 1 to asparagine 384 form a 3-dehydroquinate synthase region. NAD(+) is bound by residues aspartate 44–asparagine 46, glutamate 81–lysine 84, glycine 114–valine 116, and aspartate 119. Arginine 130 lines the 7-phospho-2-dehydro-3-deoxy-D-arabino-heptonate pocket. Threonine 139 to threonine 140 serves as a coordination point for NAD(+). Aspartate 146 and lysine 152 together coordinate 7-phospho-2-dehydro-3-deoxy-D-arabino-heptonate. Position 161 (lysine 161) interacts with NAD(+). Asparagine 162 serves as a coordination point for 7-phospho-2-dehydro-3-deoxy-D-arabino-heptonate. Residues phenylalanine 179–threonine 182 and asparagine 190 each bind NAD(+). Zn(2+) is bound at residue glutamate 194. Residues glutamate 194–lysine 197 and lysine 250 each bind 7-phospho-2-dehydro-3-deoxy-D-arabino-heptonate. Glutamate 260 functions as the Proton acceptor; for 3-dehydroquinate synthase activity in the catalytic mechanism. Residues arginine 264–asparagine 268 and histidine 271 each bind 7-phospho-2-dehydro-3-deoxy-D-arabino-heptonate. Zn(2+) is bound at residue histidine 271. Histidine 275 acts as the Proton acceptor; for 3-dehydroquinate synthase activity in catalysis. Residues histidine 287 and lysine 356 each contribute to the 7-phospho-2-dehydro-3-deoxy-D-arabino-heptonate site. Histidine 287 lines the Zn(2+) pocket. Residues valine 397 to valine 842 are EPSP synthase. Residue cysteine 824 is the For EPSP synthase activity of the active site. The tract at residues alanine 866–serine 973 is shikimate kinase. An ATP-binding site is contributed by glycine 872–threonine 879. The interval leucine 974–glutamate 1194 is 3-dehydroquinase. Residue histidine 1097 is the Proton acceptor; for 3-dehydroquinate dehydratase activity of the active site. Lysine 1125 (schiff-base intermediate with substrate; for 3-dehydroquinate dehydratase activity) is an active-site residue. The interval alanine 1207 to serine 1538 is shikimate dehydrogenase.

This sequence in the N-terminal section; belongs to the sugar phosphate cyclases superfamily. Dehydroquinate synthase family. It in the 2nd section; belongs to the EPSP synthase family. In the 3rd section; belongs to the shikimate kinase family. The protein in the 4th section; belongs to the type-I 3-dehydroquinase family. This sequence in the C-terminal section; belongs to the shikimate dehydrogenase family. Homodimer. Zn(2+) serves as cofactor.

It is found in the cytoplasm. The enzyme catalyses 7-phospho-2-dehydro-3-deoxy-D-arabino-heptonate = 3-dehydroquinate + phosphate. It carries out the reaction 3-dehydroquinate = 3-dehydroshikimate + H2O. The catalysed reaction is shikimate + NADP(+) = 3-dehydroshikimate + NADPH + H(+). It catalyses the reaction shikimate + ATP = 3-phosphoshikimate + ADP + H(+). The enzyme catalyses 3-phosphoshikimate + phosphoenolpyruvate = 5-O-(1-carboxyvinyl)-3-phosphoshikimate + phosphate. It participates in metabolic intermediate biosynthesis; chorismate biosynthesis; chorismate from D-erythrose 4-phosphate and phosphoenolpyruvate: step 2/7. Its pathway is metabolic intermediate biosynthesis; chorismate biosynthesis; chorismate from D-erythrose 4-phosphate and phosphoenolpyruvate: step 3/7. The protein operates within metabolic intermediate biosynthesis; chorismate biosynthesis; chorismate from D-erythrose 4-phosphate and phosphoenolpyruvate: step 4/7. It functions in the pathway metabolic intermediate biosynthesis; chorismate biosynthesis; chorismate from D-erythrose 4-phosphate and phosphoenolpyruvate: step 5/7. It participates in metabolic intermediate biosynthesis; chorismate biosynthesis; chorismate from D-erythrose 4-phosphate and phosphoenolpyruvate: step 6/7. The AROM polypeptide catalyzes 5 consecutive enzymatic reactions in prechorismate polyaromatic amino acid biosynthesis. The sequence is that of Pentafunctional AROM polypeptide from Ajellomyces capsulatus (strain NAm1 / WU24) (Darling's disease fungus).